A 410-amino-acid chain; its full sequence is F-box/WD repeat-containing protein 4 (410 aa).

Residues 23 to 69 (GPALWRLPEELLLLICSYLDTRALGRLAQVCRWLRRFTSCDLLWRPI) enclose the F-box domain. WD repeat units lie at residues 159–196 (GHDEDVCHFVLANSHIVSAGGDGKIGVHKIHSTFTVKY), 198–235 (AHEQEVNCVDCKGGIIVSGSRDRTAKVWPLASGRLGQC), 289–327 (PPGAGVLDVMYESPSTLLSCGYDTYVRYWDLRTSTRKCV), and 333–372 (PHDSTFYCLQTDGNHLLATGSSYYGLVRLWDRRQRACLHA).

As to quaternary structure, part of a SCF (SKP1-cullin-F-box) protein ligase complex. Interacts with POUF51.

Its function is as follows. Probably recognizes and binds to some phosphorylated proteins and promotes their ubiquitination and degradation. Likely to be involved in key signaling pathways crucial for normal limb development. May participate in Wnt signaling. In Mus musculus (Mouse), this protein is F-box/WD repeat-containing protein 4 (Fbxw4).